Reading from the N-terminus, the 145-residue chain is Large ribosomal subunit protein bL9 (145 aa).

Belongs to the bacterial ribosomal protein bL9 family.

In terms of biological role, binds to the 23S rRNA. The chain is Large ribosomal subunit protein bL9 from Mesomycoplasma hyopneumoniae (strain 232) (Mycoplasma hyopneumoniae).